We begin with the raw amino-acid sequence, 111 residues long: Large ribosomal subunit protein uL24 (111 aa).

It belongs to the universal ribosomal protein uL24 family. In terms of assembly, part of the 50S ribosomal subunit.

In terms of biological role, one of two assembly initiator proteins, it binds directly to the 5'-end of the 23S rRNA, where it nucleates assembly of the 50S subunit. Its function is as follows. One of the proteins that surrounds the polypeptide exit tunnel on the outside of the subunit. This is Large ribosomal subunit protein uL24 from Bifidobacterium longum (strain DJO10A).